We begin with the raw amino-acid sequence, 128 residues long: Small ribosomal subunit protein eS8 (128 aa).

Belongs to the eukaryotic ribosomal protein eS8 family. As to quaternary structure, part of the 30S ribosomal subunit.

The polypeptide is Small ribosomal subunit protein eS8 (Methanococcus maripaludis (strain DSM 14266 / JCM 13030 / NBRC 101832 / S2 / LL)).